The primary structure comprises 142 residues: MPFGEYPYTIDDKGRVVIPPAFREFVEDGMILTRGMEGCLYVFPLASWRRVEEQLEGLPITDAGSRAFVRFFYSGANKARLDNQSRVSVPQTLRAFAQLDGDVIVAGAPGRLELWNPERWAAAIQAVQQDPPNPELLANFVA.

2 SpoVT-AbrB domains span residues 5–47 and 76–119; these read EYPY…PLAS and ANKA…NPER.

The protein belongs to the MraZ family. Forms oligomers.

The protein resides in the cytoplasm. The protein localises to the nucleoid. This chain is Transcriptional regulator MraZ, found in Deinococcus geothermalis (strain DSM 11300 / CIP 105573 / AG-3a).